Reading from the N-terminus, the 383-residue chain is Outer membrane protein assembly factor BamB (383 aa).

Positions 1-23 are cleaved as a signal peptide; that stretch reads MMLLKRCNRRALVALAAVLLLAA. Cys24 is lipidated: N-palmitoyl cysteine. Cys24 carries S-diacylglycerol cysteine lipidation.

The protein belongs to the BamB family. Part of the Bam complex.

It localises to the cell outer membrane. Functionally, part of the outer membrane protein assembly complex, which is involved in assembly and insertion of beta-barrel proteins into the outer membrane. The polypeptide is Outer membrane protein assembly factor BamB (Alkalilimnicola ehrlichii (strain ATCC BAA-1101 / DSM 17681 / MLHE-1)).